Reading from the N-terminus, the 182-residue chain is Homeobox protein pnx (182 aa).

Residues 1–34 (MHEETSNSTLQGKTSFSIADILDPAKFNGTRETR) form an important for interaction with tle3a region. Positions 24–63 (PAKFNGTRETREISNNRESPKTTSPTQDPSAPNIANASAA) are disordered. A compositionally biased stretch (basic and acidic residues) spans 29-43 (GTRETREISNNRESP). The segment covering 52 to 63 (PSAPNIANASAA) has biased composition (low complexity). The homeobox DNA-binding region spans 67 to 126 (SKRIRTAFTLDQLRILERSFQSSHYLSVFERHCIASALGLSETQVKIWFQNRRTKWKKEL).

The protein belongs to the NK-1 homeobox family. As to quaternary structure, interacts with tle3a.

The protein resides in the nucleus. Its function is as follows. Transcriptional repressor. Activity as a repressor is enhanced by binding to the corepressor tle3a. The polypeptide is Homeobox protein pnx (Danio rerio (Zebrafish)).